Here is a 57-residue protein sequence, read N- to C-terminus: Large ribosomal subunit protein bL32 (57 aa).

The protein belongs to the bacterial ribosomal protein bL32 family.

The polypeptide is Large ribosomal subunit protein bL32 (Ureaplasma parvum serovar 3 (strain ATCC 27815 / 27 / NCTC 11736)).